The primary structure comprises 67 residues: Small ribosomal subunit protein bS21 (67 aa).

Basic and acidic residues predominate over residues 37 to 52 (EKPSERKAREAAEAVR). The segment at 37–67 (EKPSERKAREAAEAVRRARKMERKRLEREGF) is disordered.

Belongs to the bacterial ribosomal protein bS21 family.

This chain is Small ribosomal subunit protein bS21, found in Gluconacetobacter diazotrophicus (strain ATCC 49037 / DSM 5601 / CCUG 37298 / CIP 103539 / LMG 7603 / PAl5).